Consider the following 282-residue polypeptide: Shikimate dehydrogenase (NADP(+)) (282 aa).

Shikimate contacts are provided by residues 15–17 (SKS) and Thr62. The active-site Proton acceptor is the Lys66. Positions 87 and 103 each coordinate shikimate. Residues 127–131 (GAGGA), 151–156 (NRTHTK), and Met220 each bind NADP(+). Residue Tyr222 participates in shikimate binding. Gly244 contacts NADP(+).

The protein belongs to the shikimate dehydrogenase family. Homodimer.

It carries out the reaction shikimate + NADP(+) = 3-dehydroshikimate + NADPH + H(+). Its pathway is metabolic intermediate biosynthesis; chorismate biosynthesis; chorismate from D-erythrose 4-phosphate and phosphoenolpyruvate: step 4/7. Involved in the biosynthesis of the chorismate, which leads to the biosynthesis of aromatic amino acids. Catalyzes the reversible NADPH linked reduction of 3-dehydroshikimate (DHSA) to yield shikimate (SA). The sequence is that of Shikimate dehydrogenase (NADP(+)) from Shewanella baltica (strain OS195).